We begin with the raw amino-acid sequence, 395 residues long: General transcription factor IIH subunit 2-like protein (395 aa).

The region spanning 60-236 (HLYVVVDGSR…HYKELLTHHL (177 aa)) is the VWFA domain. The residue at position 95 (Y95) is a Phosphotyrosine. The C4-type zinc-finger motif lies at 291–308 (CPQCRAKYCELPVECKIC).

Belongs to the GTF2H2 family.

The protein resides in the nucleus. In terms of biological role, component of the core-TFIIH basal transcription factor involved in nucleotide excision repair (NER) of DNA and, when complexed to CAK, in RNA transcription by RNA polymerase II. The protein is General transcription factor IIH subunit 2-like protein (GTF2H2C) of Homo sapiens (Human).